We begin with the raw amino-acid sequence, 437 residues long: Enolase 2 (437 aa).

Q162 is a (2R)-2-phosphoglycerate binding site. E204 (proton donor) is an active-site residue. Residues D251, E297, and D324 each coordinate Mg(2+). Positions 349, 378, 379, and 400 each coordinate (2R)-2-phosphoglycerate. K349 acts as the Proton acceptor in catalysis.

This sequence belongs to the enolase family. It depends on Mg(2+) as a cofactor.

It localises to the cytoplasm. It is found in the secreted. The protein resides in the cell surface. It carries out the reaction (2R)-2-phosphoglycerate = phosphoenolpyruvate + H2O. It functions in the pathway carbohydrate degradation; glycolysis; pyruvate from D-glyceraldehyde 3-phosphate: step 4/5. In terms of biological role, catalyzes the reversible conversion of 2-phosphoglycerate (2-PG) into phosphoenolpyruvate (PEP). It is essential for the degradation of carbohydrates via glycolysis. The protein is Enolase 2 of Chlorobaculum tepidum (strain ATCC 49652 / DSM 12025 / NBRC 103806 / TLS) (Chlorobium tepidum).